The chain runs to 247 residues: Chaperone protein NfaE (247 aa).

The signal sequence occupies residues 1 to 29; the sequence is MKMRAVAVFTGMLTGVLSVTGLLSAGAYA. A disordered region spans residues 106 to 125; the sequence is GQQSSRRRSVSTGGEFPSDR.

Belongs to the periplasmic pilus chaperone family.

The protein resides in the periplasm. Functionally, involved in the biogenesis of the NFA-I adhesin. The protein is Chaperone protein NfaE (nfaE) of Escherichia coli.